We begin with the raw amino-acid sequence, 633 residues long: MA3 DOMAIN-CONTAINING TRANSLATION REGULATORY FACTOR 4 (633 aa).

MI domains are found at residues 56–177, 220–341, 351–472, and 514–633; these read DYKR…RAKK, ETKR…ERSD, RFKK…EISN, and DAKD…STDS. The Nuclear localization signal 1 motif lies at 94-101; sequence VKRLVSMA. The short motif at 389–396 is the Nuclear localization signal 2 element; it reads LKKLITLA.

The protein belongs to the PDCD4 family. As to quaternary structure, binds to EIF4A1. The association with ribosomes is modulated by cellular energy status and TOR activity. In terms of tissue distribution, mostly expressed, at low levels, in rosette leaves and flower buds, and, to a lower extent, in roots, stems, cauline leaves and flowers.

Its subcellular location is the nucleus. It localises to the cytoplasm. The protein resides in the cytosol. Involved in target of rapamycin (TOR)-regulated translation control, especially under energy-deficient conditions. This chain is MA3 DOMAIN-CONTAINING TRANSLATION REGULATORY FACTOR 4, found in Arabidopsis thaliana (Mouse-ear cress).